The following is an 878-amino-acid chain: Leucine--tRNA ligase (878 aa).

Low complexity predominate over residues 1 to 14 (MTASKSSSATASAS). The disordered stretch occupies residues 1 to 23 (MTASKSSSATASASDRPDRYDPI). A 'HIGH' region motif is present at residues 58 to 68 (PYPSGSLHMGH). The 'KMSKS' region motif lies at 632–636 (KMSKS). Residue Lys-635 coordinates ATP.

It belongs to the class-I aminoacyl-tRNA synthetase family.

It localises to the cytoplasm. The enzyme catalyses tRNA(Leu) + L-leucine + ATP = L-leucyl-tRNA(Leu) + AMP + diphosphate. The protein is Leucine--tRNA ligase of Synechococcus sp. (strain WH7803).